The primary structure comprises 322 residues: Phthalate dioxygenase reductase (322 aa).

The 103-residue stretch at 7 to 109 (DGFLRLKIAS…SLPRNEFPLD (103 aa)) folds into the FAD-binding FR-type domain. FMN is bound by residues 56–57 (RT), 73–75 (AVK), 81–84 (RGGS), T125, and F226. The 84-residue stretch at 239-322 (FTVRLSRSGT…AKSAELVLDL (84 aa)) folds into the 2Fe-2S ferredoxin-type domain. [2Fe-2S] cluster is bound at residue C273. FMN is bound at residue S275. C278, C281, and C309 together coordinate [2Fe-2S] cluster.

The protein belongs to the PDR/VanB family. Monomer. The cofactor is FMN.

Component of the electron transfer chain involved in pyridine nucleotide-dependent dihydroxylation of phthalate. Utilizes FMN to mediate electron transfer from the two-electron donor, NADH, to the one-electron acceptor, (2Fe-2S). This chain is Phthalate dioxygenase reductase (ophA1), found in Burkholderia cepacia (Pseudomonas cepacia).